The primary structure comprises 241 residues: LexA repressor (241 aa).

The segment at residues 41–61 (FREIGNAAGLKSPSSVKHQLQ) is a DNA-binding region (H-T-H motif). Catalysis depends on for autocatalytic cleavage activity residues S165 and K202.

Belongs to the peptidase S24 family. In terms of assembly, homodimer.

It catalyses the reaction Hydrolysis of Ala-|-Gly bond in repressor LexA.. In terms of biological role, represses a number of genes involved in the response to DNA damage (SOS response), including recA and lexA. In the presence of single-stranded DNA, RecA interacts with LexA causing an autocatalytic cleavage which disrupts the DNA-binding part of LexA, leading to derepression of the SOS regulon and eventually DNA repair. The chain is LexA repressor from Bifidobacterium longum subsp. infantis (strain ATCC 15697 / DSM 20088 / JCM 1222 / NCTC 11817 / S12).